We begin with the raw amino-acid sequence, 105 residues long: MMDLGDKINPNLSFLGINCVSFNQSPDILESLHQALPNMALLAYPNSGEVYDTEKKIWLPNSDKLNSWDTVVKQYISSGARIIGGCCRTSPKDIQEISAAVKKYT.

One can recognise a Hcy-binding domain in the interval 1 to 101; that stretch reads MMDLGDKINP…KDIQEISAAV (101 aa).

This is an uncharacterized protein from Saccharomyces cerevisiae (strain ATCC 204508 / S288c) (Baker's yeast).